We begin with the raw amino-acid sequence, 125 residues long: Small ribosomal subunit protein bS6 (125 aa).

The protein belongs to the bacterial ribosomal protein bS6 family.

In terms of biological role, binds together with bS18 to 16S ribosomal RNA. In Baumannia cicadellinicola subsp. Homalodisca coagulata, this protein is Small ribosomal subunit protein bS6.